The chain runs to 185 residues: Large ribosomal subunit protein uL5 (185 aa).

It belongs to the universal ribosomal protein uL5 family. In terms of assembly, part of the 50S ribosomal subunit; part of the 5S rRNA/L5/L18/L25 subcomplex. Contacts the 5S rRNA and the P site tRNA. Forms a bridge to the 30S subunit in the 70S ribosome.

Its function is as follows. This is one of the proteins that bind and probably mediate the attachment of the 5S RNA into the large ribosomal subunit, where it forms part of the central protuberance. In the 70S ribosome it contacts protein S13 of the 30S subunit (bridge B1b), connecting the 2 subunits; this bridge is implicated in subunit movement. Contacts the P site tRNA; the 5S rRNA and some of its associated proteins might help stabilize positioning of ribosome-bound tRNAs. The chain is Large ribosomal subunit protein uL5 from Afipia carboxidovorans (strain ATCC 49405 / DSM 1227 / KCTC 32145 / OM5) (Oligotropha carboxidovorans).